The primary structure comprises 475 residues: UDP-N-acetylmuramate--L-alanine ligase (475 aa).

114–120 (GTHGKTT) contributes to the ATP binding site.

This sequence belongs to the MurCDEF family.

It localises to the cytoplasm. The catalysed reaction is UDP-N-acetyl-alpha-D-muramate + L-alanine + ATP = UDP-N-acetyl-alpha-D-muramoyl-L-alanine + ADP + phosphate + H(+). The protein operates within cell wall biogenesis; peptidoglycan biosynthesis. Its function is as follows. Cell wall formation. The protein is UDP-N-acetylmuramate--L-alanine ligase of Bartonella quintana (strain Toulouse) (Rochalimaea quintana).